We begin with the raw amino-acid sequence, 348 residues long: Phosphate acyltransferase (348 aa).

This sequence belongs to the PlsX family. As to quaternary structure, homodimer. Probably interacts with PlsY.

The protein resides in the cytoplasm. The enzyme catalyses a fatty acyl-[ACP] + phosphate = an acyl phosphate + holo-[ACP]. It participates in lipid metabolism; phospholipid metabolism. Catalyzes the reversible formation of acyl-phosphate (acyl-PO(4)) from acyl-[acyl-carrier-protein] (acyl-ACP). This enzyme utilizes acyl-ACP as fatty acyl donor, but not acyl-CoA. The sequence is that of Phosphate acyltransferase from Neisseria gonorrhoeae (strain ATCC 700825 / FA 1090).